A 242-amino-acid chain; its full sequence is Uridylate kinase (242 aa).

11 to 14 (KLSG) provides a ligand contact to ATP. Positions 19–24 (GEKGVG) are involved in allosteric activation by GTP. Gly53 contacts UMP. ATP-binding residues include Gly54 and Arg58. UMP is bound by residues Asp73 and 134–141 (IGSPYFST). ATP is bound by residues Asn162, Tyr168, and Asp171.

It belongs to the UMP kinase family. Homohexamer.

It is found in the cytoplasm. It catalyses the reaction UMP + ATP = UDP + ADP. It functions in the pathway pyrimidine metabolism; CTP biosynthesis via de novo pathway; UDP from UMP (UMPK route): step 1/1. Allosterically activated by GTP. Inhibited by UTP. In terms of biological role, catalyzes the reversible phosphorylation of UMP to UDP. The sequence is that of Uridylate kinase from Streptococcus pyogenes serotype M1.